The sequence spans 208 residues: Large ribosomal subunit protein uL3 (208 aa).

The segment at 116–148 is disordered; sequence GFQGVIKRHGQSRGPMAHGSRYHRRPGSMGPVA.

The protein belongs to the universal ribosomal protein uL3 family. In terms of assembly, part of the 50S ribosomal subunit. Forms a cluster with proteins L14 and L19.

In terms of biological role, one of the primary rRNA binding proteins, it binds directly near the 3'-end of the 23S rRNA, where it nucleates assembly of the 50S subunit. The chain is Large ribosomal subunit protein uL3 from Streptococcus pneumoniae (strain Hungary19A-6).